A 417-amino-acid polypeptide reads, in one-letter code: NADH-quinone oxidoreductase subunit D (417 aa).

Belongs to the complex I 49 kDa subunit family. As to quaternary structure, NDH-1 is composed of 14 different subunits. Subunits NuoB, C, D, E, F, and G constitute the peripheral sector of the complex.

The protein localises to the cell inner membrane. It catalyses the reaction a quinone + NADH + 5 H(+)(in) = a quinol + NAD(+) + 4 H(+)(out). In terms of biological role, NDH-1 shuttles electrons from NADH, via FMN and iron-sulfur (Fe-S) centers, to quinones in the respiratory chain. The immediate electron acceptor for the enzyme in this species is believed to be ubiquinone. Couples the redox reaction to proton translocation (for every two electrons transferred, four hydrogen ions are translocated across the cytoplasmic membrane), and thus conserves the redox energy in a proton gradient. The sequence is that of NADH-quinone oxidoreductase subunit D from Paraburkholderia xenovorans (strain LB400).